A 151-amino-acid chain; its full sequence is MVASDEFRRVFGSFDQDGDGKISATELRLCVKASLGEDMPDEEVQALMALADTDGDGLLDEEEFVRLVTEMEADGDEEEDDDDETCRCLREAFAMYEMEGRGCITPLSLKLMLSKLGTHLDVAECQAMICRFDMNGDGVLTFDEFKTMMMA.

4 consecutive EF-hand domains span residues 2 to 37 (VASD…SLGE), 39 to 74 (MPDE…MEAD), 84 to 119 (ETCR…LGTH), and 120 to 151 (LDVA…MMMA). Asp-15, Asp-17, Asp-19, Lys-21, Glu-26, Asp-52, Asp-54, Asp-56, and Glu-63 together coordinate Ca(2+). Asp-133, Asn-135, Asp-137, and Glu-144 together coordinate Ca(2+).

Its function is as follows. Potential calcium sensor. The chain is Putative calcium-binding protein CML23 (CML23) from Oryza sativa subsp. japonica (Rice).